The chain runs to 84 residues: Toluene-4-monooxygenase system, hydroxylase component subunit gamma (84 aa).

It belongs to the TmoB/XamoB family. In terms of assembly, the alkene monooxygenase multicomponent enzyme system is composed of an electron transfer component and a monooxygenase component interacting with the effector protein TmoD. The electron transfer component is composed of a ferredoxin reductase (TmoF) and a ferredoxin (TmoC), and the monooxygenase component is formed by a heterohexamer (dimer of heterotrimers) of two alpha subunits (TmoA), two beta subunits (TmoE) and two gamma subunits (TmoB).

The enzyme catalyses toluene + NADH + O2 + H(+) = 4-methylphenol + NAD(+) + H2O. The protein operates within xenobiotic degradation; toluene degradation. With respect to regulation, inhibited by Zn(2+) and Cu(2+). Functionally, component of the toluene-4-monooxygenase multicomponent enzyme system which catalyzes the O2- and NADH-dependent hydroxylation of toluene to form p-cresol. Also able to convert benzene to phenol, catechol, and 1,2,3-trihydroxybenzene by successive hydroxylations. This is Toluene-4-monooxygenase system, hydroxylase component subunit gamma from Ectopseudomonas mendocina (Pseudomonas mendocina).